The primary structure comprises 274 residues: Large ribosomal subunit protein uL2 (274 aa).

A disordered region spans residues 223 to 274 (VAMNPVDHPHGGGEGRTSGGRHPVSPWGMPTKGFKTRKNKSTDKYIVRRRNK).

This sequence belongs to the universal ribosomal protein uL2 family. Part of the 50S ribosomal subunit. Forms a bridge to the 30S subunit in the 70S ribosome.

Functionally, one of the primary rRNA binding proteins. Required for association of the 30S and 50S subunits to form the 70S ribosome, for tRNA binding and peptide bond formation. It has been suggested to have peptidyltransferase activity; this is somewhat controversial. Makes several contacts with the 16S rRNA in the 70S ribosome. The sequence is that of Large ribosomal subunit protein uL2 from Aliivibrio fischeri (strain ATCC 700601 / ES114) (Vibrio fischeri).